Reading from the N-terminus, the 559-residue chain is Potassium-transporting ATPase potassium-binding subunit (559 aa).

12 helical membrane-spanning segments follow: residues 5–25 (GFLL…PLGT), 63–83 (LLAI…LLML), 131–151 (VGLT…VFAL), 173–193 (ITLW…IQQG), 254–274 (VQML…GEVV), 282–302 (AILW…MWAE), 327–347 (FGIL…CGAV), 356–376 (ALGG…FGGV), 379–399 (GLYG…LMVG), 416–436 (MIAL…ALAM), 483–503 (LLLA…VMAI), and 525–545 (ALFI…TFIP).

Belongs to the KdpA family. In terms of assembly, the system is composed of three essential subunits: KdpA, KdpB and KdpC.

It localises to the cell inner membrane. Functionally, part of the high-affinity ATP-driven potassium transport (or Kdp) system, which catalyzes the hydrolysis of ATP coupled with the electrogenic transport of potassium into the cytoplasm. This subunit binds the periplasmic potassium ions and delivers the ions to the membrane domain of KdpB through an intramembrane tunnel. In Klebsiella pneumoniae (strain 342), this protein is Potassium-transporting ATPase potassium-binding subunit.